The chain runs to 105 residues: Small ribosomal subunit protein uS10 (105 aa).

Belongs to the universal ribosomal protein uS10 family. Part of the 30S ribosomal subunit.

Functionally, involved in the binding of tRNA to the ribosomes. The protein is Small ribosomal subunit protein uS10 of Thermus thermophilus (strain ATCC BAA-163 / DSM 7039 / HB27).